The following is a 299-amino-acid chain: ATP phosphoribosyltransferase (299 aa).

The protein belongs to the ATP phosphoribosyltransferase family. Long subfamily. As to quaternary structure, equilibrium between an active dimeric form, an inactive hexameric form and higher aggregates. Interconversion between the various forms is largely reversible and is influenced by the natural substrates and inhibitors of the enzyme. Requires Mg(2+) as cofactor.

The protein resides in the cytoplasm. The catalysed reaction is 1-(5-phospho-beta-D-ribosyl)-ATP + diphosphate = 5-phospho-alpha-D-ribose 1-diphosphate + ATP. Its pathway is amino-acid biosynthesis; L-histidine biosynthesis; L-histidine from 5-phospho-alpha-D-ribose 1-diphosphate: step 1/9. Its activity is regulated as follows. Feedback inhibited by histidine. Catalyzes the condensation of ATP and 5-phosphoribose 1-diphosphate to form N'-(5'-phosphoribosyl)-ATP (PR-ATP). Has a crucial role in the pathway because the rate of histidine biosynthesis seems to be controlled primarily by regulation of HisG enzymatic activity. In Proteus mirabilis (strain HI4320), this protein is ATP phosphoribosyltransferase.